The following is a 76-amino-acid chain: DNA-directed RNA polymerase subunit omega (76 aa).

The protein belongs to the RNA polymerase subunit omega family. In terms of assembly, in cyanobacteria the RNAP catalytic core is composed of 2 alpha, 1 beta, 1 beta', 1 gamma and 1 omega subunit. When a sigma factor is associated with the core the holoenzyme is formed, which can initiate transcription.

It catalyses the reaction RNA(n) + a ribonucleoside 5'-triphosphate = RNA(n+1) + diphosphate. In terms of biological role, promotes RNA polymerase assembly. Latches the N- and C-terminal regions of the beta' subunit thereby facilitating its interaction with the beta and alpha subunits. The sequence is that of DNA-directed RNA polymerase subunit omega (rpoZ) from Synechocystis sp. (strain ATCC 27184 / PCC 6803 / Kazusa).